A 430-amino-acid polypeptide reads, in one-letter code: 3-phosphoshikimate 1-carboxyvinyltransferase (430 aa).

The 3-phosphoshikimate site is built by lysine 20, serine 21, and arginine 25. Position 20 (lysine 20) interacts with phosphoenolpyruvate. Glycine 92 and arginine 120 together coordinate phosphoenolpyruvate. Residues serine 166, glutamine 168, aspartate 312, and lysine 339 each contribute to the 3-phosphoshikimate site. Position 168 (glutamine 168) interacts with phosphoenolpyruvate. Aspartate 312 acts as the Proton acceptor in catalysis. Residues arginine 343 and arginine 387 each contribute to the phosphoenolpyruvate site.

It belongs to the EPSP synthase family. As to quaternary structure, monomer.

Its subcellular location is the cytoplasm. It carries out the reaction 3-phosphoshikimate + phosphoenolpyruvate = 5-O-(1-carboxyvinyl)-3-phosphoshikimate + phosphate. Its pathway is metabolic intermediate biosynthesis; chorismate biosynthesis; chorismate from D-erythrose 4-phosphate and phosphoenolpyruvate: step 6/7. Catalyzes the transfer of the enolpyruvyl moiety of phosphoenolpyruvate (PEP) to the 5-hydroxyl of shikimate-3-phosphate (S3P) to produce enolpyruvyl shikimate-3-phosphate and inorganic phosphate. The sequence is that of 3-phosphoshikimate 1-carboxyvinyltransferase from Lactococcus lactis subsp. lactis (strain IL1403) (Streptococcus lactis).